The following is a 199-amino-acid chain: Peptidyl-tRNA hydrolase (199 aa).

Tyr-18 is a tRNA binding site. His-23 (proton acceptor) is an active-site residue. Tyr-72, Asn-74, and Asn-120 together coordinate tRNA.

Belongs to the PTH family. In terms of assembly, monomer.

The protein resides in the cytoplasm. It carries out the reaction an N-acyl-L-alpha-aminoacyl-tRNA + H2O = an N-acyl-L-amino acid + a tRNA + H(+). Functionally, hydrolyzes ribosome-free peptidyl-tRNAs (with 1 or more amino acids incorporated), which drop off the ribosome during protein synthesis, or as a result of ribosome stalling. In terms of biological role, catalyzes the release of premature peptidyl moieties from peptidyl-tRNA molecules trapped in stalled 50S ribosomal subunits, and thus maintains levels of free tRNAs and 50S ribosomes. This chain is Peptidyl-tRNA hydrolase, found in Bifidobacterium animalis subsp. lactis (strain AD011).